The primary structure comprises 440 residues: Thymidine phosphorylase (440 aa).

The protein belongs to the thymidine/pyrimidine-nucleoside phosphorylase family. In terms of assembly, homodimer.

The enzyme catalyses thymidine + phosphate = 2-deoxy-alpha-D-ribose 1-phosphate + thymine. It participates in pyrimidine metabolism; dTMP biosynthesis via salvage pathway; dTMP from thymine: step 1/2. Its function is as follows. The enzymes which catalyze the reversible phosphorolysis of pyrimidine nucleosides are involved in the degradation of these compounds and in their utilization as carbon and energy sources, or in the rescue of pyrimidine bases for nucleotide synthesis. The protein is Thymidine phosphorylase of Erwinia tasmaniensis (strain DSM 17950 / CFBP 7177 / CIP 109463 / NCPPB 4357 / Et1/99).